Consider the following 318-residue polypeptide: Melanocyte-stimulating hormone receptor (318 aa).

Residues 1–37 (MPMQGAQRKLLGSLNSTPTATSNLGLAANRTGAPCLE) lie on the Extracellular side of the membrane. N-linked (GlcNAc...) asparagine glycosylation occurs at Asn29. A helical membrane pass occupies residues 38–63 (LPIPNGLFLSLGLVSLVENVLVVAAI). The Cytoplasmic segment spans residues 64–72 (AKNRNLHSS). A helical membrane pass occupies residues 73-93 (MYCFICCLALSDLLVSGSNML). Over 94–118 (ETAVILLLEAGVLATRASVVQQLHN) the chain is Extracellular. Residues 119–140 (TIDVLTCSSMLCSLCFLGAIAV) form a helical membrane-spanning segment. Residues 141–163 (DRYISIFYALRYHSIMTLPRAQR) lie on the Cytoplasmic side of the membrane. A helical transmembrane segment spans residues 164 to 183 (AVAAIWVASVLSSTLFITYY). Topologically, residues 184 to 191 (DHAAVLLC) are extracellular. Residues 192–211 (LMVFFLAMLVLMAVLYVHML) form a helical membrane-spanning segment. Topologically, residues 212–240 (ARARQHAQGIIRLHKRQPPAHKGFGLRGA) are cytoplasmic. A helical transmembrane segment spans residues 241 to 266 (ATLTILLGIFFLCWGPFFLCLTLVVF). Residues 267–279 (CPQHLTCNCIFKN) lie on the Extracellular side of the membrane. The chain crosses the membrane as a helical span at residues 280–300 (FKVFLTLIICNTIIDPLIYAF). Residues 301 to 317 (RSQELRRMLKEVLGRGR) lie on the Cytoplasmic side of the membrane.

The protein belongs to the G-protein coupled receptor 1 family. Interacts with MGRN1, but does not undergo MGRN1-mediated ubiquitination; this interaction competes with GNAS-binding and thus inhibits agonist-induced cAMP production. Interacts with OPN3; the interaction results in a decrease in MC1R-mediated cAMP signaling and ultimately a decrease in melanin production in melanocytes.

It localises to the cell membrane. Functionally, receptor for MSH (alpha, beta and gamma) and ACTH. The activity of this receptor is mediated by G proteins which activate adenylate cyclase. Mediates melanogenesis, the production of eumelanin (black/brown) and phaeomelanin (red/yellow), via regulation of cAMP signaling in melanocytes. The polypeptide is Melanocyte-stimulating hormone receptor (MC1R) (Leontopithecus rosalia (Golden lion tamarin)).